The sequence spans 346 residues: tRNA N6-adenosine threonylcarbamoyltransferase (346 aa).

Fe cation is bound by residues H111 and H115. Residues 134 to 138 (LVSGG), D167, G180, and N279 contribute to the substrate site. D307 contributes to the Fe cation binding site.

This sequence belongs to the KAE1 / TsaD family. Fe(2+) serves as cofactor.

It localises to the cytoplasm. The catalysed reaction is L-threonylcarbamoyladenylate + adenosine(37) in tRNA = N(6)-L-threonylcarbamoyladenosine(37) in tRNA + AMP + H(+). Functionally, required for the formation of a threonylcarbamoyl group on adenosine at position 37 (t(6)A37) in tRNAs that read codons beginning with adenine. Is involved in the transfer of the threonylcarbamoyl moiety of threonylcarbamoyl-AMP (TC-AMP) to the N6 group of A37, together with TsaE and TsaB. TsaD likely plays a direct catalytic role in this reaction. The sequence is that of tRNA N6-adenosine threonylcarbamoyltransferase from Burkholderia pseudomallei (strain K96243).